Reading from the N-terminus, the 192-residue chain is 3-hydroxyanthranilate 3,4-dioxygenase (192 aa).

O2 is bound at residue Arg50. Residues His54, Glu60, and His102 each contribute to the Fe cation site. Glu60 contributes to the substrate binding site. Substrate is bound by residues Arg106 and Glu116. A divalent metal cation contacts are provided by Cys131, Cys134, Cys168, and Cys171.

It belongs to the 3-HAO family. Requires Fe(2+) as cofactor.

The protein localises to the cytoplasm. It catalyses the reaction 3-hydroxyanthranilate + O2 = (2Z,4Z)-2-amino-3-carboxymuconate 6-semialdehyde. The protein operates within cofactor biosynthesis; NAD(+) biosynthesis; quinolinate from L-kynurenine: step 3/3. Functionally, catalyzes the oxidative ring opening of 3-hydroxyanthranilate to 2-amino-3-carboxymuconate semialdehyde, which spontaneously cyclizes to quinolinate. This chain is 3-hydroxyanthranilate 3,4-dioxygenase (bna1), found in Neosartorya fischeri (strain ATCC 1020 / DSM 3700 / CBS 544.65 / FGSC A1164 / JCM 1740 / NRRL 181 / WB 181) (Aspergillus fischerianus).